Here is a 257-residue protein sequence, read N- to C-terminus: Flap endonuclease Xni (257 aa).

D112 lines the Mg(2+) pocket. One can recognise a 5'-3' exonuclease domain in the interval 169–256 (EQKKLVEFWA…LGFSLKQLRL (88 aa)). F179, A180, P188, V190, and I193 together coordinate K(+). The interval 192-197 (GIGTKS) is interaction with DNA.

Belongs to the Xni family. The cofactor is Mg(2+). K(+) is required as a cofactor.

Has flap endonuclease activity. During DNA replication, flap endonucleases cleave the 5'-overhanging flap structure that is generated by displacement synthesis when DNA polymerase encounters the 5'-end of a downstream Okazaki fragment. The protein is Flap endonuclease Xni of Pseudoalteromonas translucida (strain TAC 125).